Consider the following 274-residue polypeptide: Large ribosomal subunit protein uL2 (274 aa).

2 disordered regions span residues 28-55 and 224-274; these read APHAPLLEKKSKSGGRNNNGRITTRHVG and VAMN…RRRK.

This sequence belongs to the universal ribosomal protein uL2 family. In terms of assembly, part of the 50S ribosomal subunit. Forms a bridge to the 30S subunit in the 70S ribosome.

One of the primary rRNA binding proteins. Required for association of the 30S and 50S subunits to form the 70S ribosome, for tRNA binding and peptide bond formation. It has been suggested to have peptidyltransferase activity; this is somewhat controversial. Makes several contacts with the 16S rRNA in the 70S ribosome. This is Large ribosomal subunit protein uL2 from Pseudomonas putida (strain GB-1).